Reading from the N-terminus, the 123-residue chain is ATP synthase epsilon chain (123 aa).

Belongs to the ATPase epsilon chain family. In terms of assembly, F-type ATPases have 2 components, CF(1) - the catalytic core - and CF(0) - the membrane proton channel. CF(1) has five subunits: alpha(3), beta(3), gamma(1), delta(1), epsilon(1). CF(0) has three main subunits: a, b and c.

The protein resides in the cell inner membrane. Its function is as follows. Produces ATP from ADP in the presence of a proton gradient across the membrane. The chain is ATP synthase epsilon chain from Helicobacter acinonychis (strain Sheeba).